A 131-amino-acid chain; its full sequence is MRHRHGLRKLNRTSSHRLAMLRNMSNSLIEHEVIKTTLPKAKELRKVVEPLITLGKKPSLANRRLAFNRLRDRDSVAKLFDVLGPRFANRPGGYLRVLKFGFRVGDNAPMALVELLDRPEVDETENVQEAE.

Belongs to the bacterial ribosomal protein bL17 family. In terms of assembly, part of the 50S ribosomal subunit. Contacts protein L32.

This is Large ribosomal subunit protein bL17 from Burkholderia ambifaria (strain MC40-6).